Here is a 102-residue protein sequence, read N- to C-terminus: MFLKTGDKVRVITGKDKGQEGTIKKTFAKENRVIVEGVNKIKKHQKPSNMNPNGGIIDTEAPINASNVMLLDPSTNEPTRVGFEVVDGKKVRVAKKSGKQID.

It belongs to the universal ribosomal protein uL24 family. As to quaternary structure, part of the 50S ribosomal subunit.

In terms of biological role, one of two assembly initiator proteins, it binds directly to the 5'-end of the 23S rRNA, where it nucleates assembly of the 50S subunit. Functionally, one of the proteins that surrounds the polypeptide exit tunnel on the outside of the subunit. The sequence is that of Large ribosomal subunit protein uL24 from Limosilactobacillus fermentum (strain NBRC 3956 / LMG 18251) (Lactobacillus fermentum).